The sequence spans 280 residues: Intimin (280 aa).

Residues 1 to 92 (ITEIKADKTT…MLKLLEVEFF (92 aa)) form the Big-1 domain. In terms of domain architecture, BIG2 spans 127-173 (ANGGNGKYTWYSANPAIASVDPSSGQVTLKDKGETTITVVSGDKQTA). Cysteine 201 and cysteine 278 form a disulfide bridge.

It belongs to the intimin/invasin family.

The protein localises to the cell outer membrane. An inverse autotransporter. The polypeptide is Intimin (eaeA) (Hafnia alvei).